Here is a 75-residue protein sequence, read N- to C-terminus: KYKPTDATTNPSLILQAKFLEELQNSKKIYNYYKKESVVEHLSESSAKKLEMTEANFRWEMNEDKFAVDAVKLEK.

This sequence belongs to the transaldolase family. Type 1 subfamily. In terms of assembly, homodimer. Post-translationally, phosphorylated. In terms of tissue distribution, predominantly expressed in Y-organs.

The protein resides in the cytoplasm. The enzyme catalyses D-sedoheptulose 7-phosphate + D-glyceraldehyde 3-phosphate = D-erythrose 4-phosphate + beta-D-fructose 6-phosphate. It participates in carbohydrate degradation; pentose phosphate pathway; D-glyceraldehyde 3-phosphate and beta-D-fructose 6-phosphate from D-ribose 5-phosphate and D-xylulose 5-phosphate (non-oxidative stage): step 2/3. In terms of biological role, transaldolase is important for the balance of metabolites in the pentose-phosphate pathway. May play a role in the conversion of sterols into ecdysteroids via NADPH. The polypeptide is Transaldolase (Carcinus maenas (Common shore crab)).